Here is a 255-residue protein sequence, read N- to C-terminus: F-box/SPRY domain-containing protein 1 (255 aa).

An F-box domain is found at 3–51 (DRVAALCNYNVLEVVFSYLDLNDLGRCSQVCKSWFHFLNDENSDVWRFH). The B30.2/SPRY domain maps to 61 to 253 (TKSELLSPVP…VSMVYCGTPL (193 aa)).

This sequence belongs to the FBXO45/Fsn family. Component of an E3 ubiquitin ligase complex composed of hiw and Fsn.

It localises to the synapse. It participates in protein modification; protein ubiquitination. Its function is as follows. Required in the presynaptic motoneuron to down-regulate the levels of wnd and restrain synaptic terminal growth at the neuromuscular junction (NMJ). The sequence is that of F-box/SPRY domain-containing protein 1 from Drosophila persimilis (Fruit fly).